An 843-amino-acid polypeptide reads, in one-letter code: Major vault protein alpha (843 aa).

Residue A2 is modified to N-acetylalanine. 9 MVP repeats span residues 2-56 (ADLN…IPQR), 57-111 (NYCT…KVTA), 112-163 (LQVV…EEIK), 164-216 (ATII…EIVN), 217-272 (AYVL…GEVH), 273-324 (ITTL…IHNI), 325-376 (YVLT…KRES), 377-442 (IPLD…STRV), and 443-505 (VTYR…FLGP). Residues 643 to 663 (QEAAARHEAERLEQGARGRLE) form a disordered region. Over residues 646 to 663 (AARHEAERLEQGARGRLE) the composition is skewed to basic and acidic residues.

In terms of assembly, the vault ribonucleoprotein particle is a huge (400 A x 670 A) cage structure of 12.9 MDa. It consists of a dimer of half-vaults, with each half-vault comprising 39 identical major vault protein (MVP) chains. Dictyostelium is one of the few organisms in which the major component is actually two proteins (alpha and beta).

Its subcellular location is the cytoplasm. The protein resides in the nucleus. Its function is as follows. Unknown, though MVP-alpha is required for normal vault structure. The sequence is that of Major vault protein alpha (mvpA) from Dictyostelium discoideum (Social amoeba).